The sequence spans 325 residues: Tetraacyldisaccharide 4'-kinase (325 aa).

Residue 55 to 62 coordinates ATP; that stretch reads TAGGNGKT.

The protein belongs to the LpxK family.

The catalysed reaction is a lipid A disaccharide + ATP = a lipid IVA + ADP + H(+). The protein operates within glycolipid biosynthesis; lipid IV(A) biosynthesis; lipid IV(A) from (3R)-3-hydroxytetradecanoyl-[acyl-carrier-protein] and UDP-N-acetyl-alpha-D-glucosamine: step 6/6. Its function is as follows. Transfers the gamma-phosphate of ATP to the 4'-position of a tetraacyldisaccharide 1-phosphate intermediate (termed DS-1-P) to form tetraacyldisaccharide 1,4'-bis-phosphate (lipid IVA). The protein is Tetraacyldisaccharide 4'-kinase of Salmonella paratyphi A (strain ATCC 9150 / SARB42).